Reading from the N-terminus, the 439-residue chain is Proline--tRNA ligase (439 aa).

This sequence belongs to the class-II aminoacyl-tRNA synthetase family. ProS type 2 subfamily. In terms of assembly, homodimer.

The protein resides in the cytoplasm. It catalyses the reaction tRNA(Pro) + L-proline + ATP = L-prolyl-tRNA(Pro) + AMP + diphosphate. Its function is as follows. Catalyzes the attachment of proline to tRNA(Pro) in a two-step reaction: proline is first activated by ATP to form Pro-AMP and then transferred to the acceptor end of tRNA(Pro). The sequence is that of Proline--tRNA ligase from Rhodopseudomonas palustris (strain HaA2).